Reading from the N-terminus, the 436-residue chain is Hydrogenobyrinate a,c-diamide synthase (436 aa).

The GATase cobBQ-type domain occupies 244–435 (RIAVARDDAF…MHVIDFSGEA (192 aa)). Catalysis depends on C327, which acts as the Nucleophile.

This sequence belongs to the CobB/CbiA family. Mg(2+) serves as cofactor.

It catalyses the reaction hydrogenobyrinate + 2 L-glutamine + 2 ATP + 2 H2O = hydrogenobyrinate a,c-diamide + 2 L-glutamate + 2 ADP + 2 phosphate + 2 H(+). It functions in the pathway cofactor biosynthesis; adenosylcobalamin biosynthesis; cob(II)yrinate a,c-diamide from precorrin-2 (aerobic route): step 9/10. Its function is as follows. Catalyzes the ATP-dependent amidation of the two carboxylate groups at positions a and c of hydrogenobyrinate, using either L-glutamine or ammonia as the nitrogen source. This is Hydrogenobyrinate a,c-diamide synthase from Brucella suis biovar 1 (strain 1330).